We begin with the raw amino-acid sequence, 309 residues long: Putative taste receptor type 2 member 33 (309 aa).

Position 1 (M1) is a topological domain, extracellular. A helical transmembrane segment spans residues 2–22; that stretch reads VYFLPIIFSILVVFAFVLGNF. Residues 23–46 lie on the Cytoplasmic side of the membrane; the sequence is SNGFIALVNVIDWVKRQKISSADQ. Residues 47–67 form a helical membrane-spanning segment; the sequence is ILTALVVSRVGLLWVILLHWY. The Extracellular portion of the chain corresponds to 68 to 86; sequence ANVFNSALYSLEVRIVASN. An N-linked (GlcNAc...) asparagine glycan is attached at N86. Residues 87–107 traverse the membrane as a helical segment; that stretch reads ISAVINHFSIWLAASLSIFYL. The Cytoplasmic portion of the chain corresponds to 108–127; sequence LKIANFSNLIFLHLKKRIKS. Residues 128 to 148 form a helical membrane-spanning segment; sequence VVLVILLGPLVFLICNLAVIT. Over 149–181 the chain is Extracellular; it reads MDERVWTKEYEGNVTWKIKLRNAIHLSSLTVTT. The N-linked (GlcNAc...) asparagine glycan is linked to N161. A helical transmembrane segment spans residues 182-202; it reads LANLIPFTLSLICFLLLICSL. Topologically, residues 203 to 229 are cytoplasmic; it reads CKHLKKMQLHSKGSQDPSTKVHIKALQ. A helical transmembrane segment spans residues 230-250; it reads TVISFLMLCAIYFLSIMISVW. Over 251–259 the chain is Extracellular; sequence NLRSLENKP. A helical membrane pass occupies residues 260–280; it reads VFMFCKAIRFSYPSIHPFILI. Over 281–309 the chain is Cytoplasmic; it reads WGNKKLKQTFLSVFWQVRYWVKGEKPSSP.

It belongs to the G-protein coupled receptor T2R family.

It is found in the membrane. In terms of biological role, putative taste receptor which may play a role in the perception of bitterness. This chain is Putative taste receptor type 2 member 33, found in Homo sapiens (Human).